A 374-amino-acid polypeptide reads, in one-letter code: Chaperone protein DnaJ (374 aa).

One can recognise a J domain in the interval Asp5–Gly70. The CR-type zinc-finger motif lies at Gly133–Tyr211. Zn(2+)-binding residues include Cys146, Cys149, Cys163, Cys166, Cys185, Cys188, Cys199, and Cys202. CXXCXGXG motif repeat units lie at residues Cys146 to Gly153, Cys163 to Gly170, Cys185 to Gly192, and Cys199 to Gly206.

This sequence belongs to the DnaJ family. As to quaternary structure, homodimer. It depends on Zn(2+) as a cofactor.

It is found in the cytoplasm. Participates actively in the response to hyperosmotic and heat shock by preventing the aggregation of stress-denatured proteins and by disaggregating proteins, also in an autonomous, DnaK-independent fashion. Unfolded proteins bind initially to DnaJ; upon interaction with the DnaJ-bound protein, DnaK hydrolyzes its bound ATP, resulting in the formation of a stable complex. GrpE releases ADP from DnaK; ATP binding to DnaK triggers the release of the substrate protein, thus completing the reaction cycle. Several rounds of ATP-dependent interactions between DnaJ, DnaK and GrpE are required for fully efficient folding. Also involved, together with DnaK and GrpE, in the DNA replication of plasmids through activation of initiation proteins. The chain is Chaperone protein DnaJ from Pseudomonas fluorescens (strain ATCC BAA-477 / NRRL B-23932 / Pf-5).